A 483-amino-acid chain; its full sequence is tRNA-2-methylthio-N(6)-dimethylallyladenosine synthase (483 aa).

One can recognise an MTTase N-terminal domain in the interval Lys31–Ala148. Residues Cys40, Cys77, Cys111, Cys192, Cys196, and Cys199 each coordinate [4Fe-4S] cluster. The Radical SAM core domain maps to Arg178–Glu410. The region spanning Asp413–Asn477 is the TRAM domain.

The protein belongs to the methylthiotransferase family. MiaB subfamily. Monomer. Requires [4Fe-4S] cluster as cofactor.

Its subcellular location is the cytoplasm. It carries out the reaction N(6)-dimethylallyladenosine(37) in tRNA + (sulfur carrier)-SH + AH2 + 2 S-adenosyl-L-methionine = 2-methylsulfanyl-N(6)-dimethylallyladenosine(37) in tRNA + (sulfur carrier)-H + 5'-deoxyadenosine + L-methionine + A + S-adenosyl-L-homocysteine + 2 H(+). Functionally, catalyzes the methylthiolation of N6-(dimethylallyl)adenosine (i(6)A), leading to the formation of 2-methylthio-N6-(dimethylallyl)adenosine (ms(2)i(6)A) at position 37 in tRNAs that read codons beginning with uridine. This Acinetobacter baumannii (strain AB0057) protein is tRNA-2-methylthio-N(6)-dimethylallyladenosine synthase.